The primary structure comprises 303 residues: MTSRTEAVKAYLLDLQDRICSALETEDGGARFVEDAWVREAGGGGRTRVIGDGKVIEKGGVNFSHVFGAGLPPSASAHRPELAGRGFEALGVSLVIHPHNPHVPTSHANVRFFIAEKEGEEAVWWFGGGFDLTPYYGNEEDCIHWHRVAEQACAPFGADVYPRYKAWCDRYFHLKHRGEPRGIGGLFFDDLNEWDFDTCFAFIRAIGDAYVNAYLPIVQRRKDTPYTPQQREFQEYRRGRYVEFNLVYDRGTLFGLQSGGRTESILMSLPPQVRWGYDWKAAPGSEEARLTEYFLQDRDWLGQ.

A substrate-binding site is contributed by S93. Positions 97 and 107 each coordinate a divalent metal cation. Residue H107 is the Proton donor of the active site. N109 to R111 is a substrate binding site. A divalent metal cation contacts are provided by H146 and H176. Residues Y241 to G276 are important for dimerization. Position 259 to 261 (G259 to R261) interacts with substrate.

The protein belongs to the aerobic coproporphyrinogen-III oxidase family. In terms of assembly, homodimer. It depends on a divalent metal cation as a cofactor.

Its subcellular location is the cytoplasm. It catalyses the reaction coproporphyrinogen III + O2 + 2 H(+) = protoporphyrinogen IX + 2 CO2 + 2 H2O. It participates in porphyrin-containing compound metabolism; protoporphyrin-IX biosynthesis; protoporphyrinogen-IX from coproporphyrinogen-III (O2 route): step 1/1. Its function is as follows. Involved in the heme biosynthesis. Catalyzes the aerobic oxidative decarboxylation of propionate groups of rings A and B of coproporphyrinogen-III to yield the vinyl groups in protoporphyrinogen-IX. The protein is Oxygen-dependent coproporphyrinogen-III oxidase of Pseudomonas putida (strain GB-1).